We begin with the raw amino-acid sequence, 742 residues long: Protein CdcH (742 aa).

Residues Gly-230–Thr-237 and Gly-503–Thr-510 each bind ATP. Residues Phe-722 to Gln-742 are disordered. A compositionally biased stretch (polar residues) spans Lys-723–Gln-734.

Belongs to the AAA ATPase family. CDC48 subfamily.

Functionally, may be part of a transduction pathway connecting light to cell division. The protein is Protein CdcH (cdcH) of Halobacterium salinarum (strain ATCC 700922 / JCM 11081 / NRC-1) (Halobacterium halobium).